Reading from the N-terminus, the 1133-residue chain is Protein cordon-bleu (1133 aa).

Pro residues predominate over residues 1–11 (MKARAPPPPGK). Residues 1-25 (MKARAPPPPGKPAAQNVHSEQKLPH) form a disordered region. Phosphoserine is present on residues S31, S34, S196, S219, S256, and S278. Disordered stretches follow at residues 246 to 393 (AEHL…SVNG) and 442 to 568 (QGGI…GQAS). A compositionally biased stretch (polar residues) spans 272–301 (CVTTPNSPSLHSRSLTLGPSLSLGNISGMS). The short motif at 307-312 (KKRRAP) is the KKRRAP 1 element. Phosphoserine occurs at positions 330 and 333. The KKRRAP 2 motif lies at 340–345 (KKRRAP). Over residues 345 to 358 (PAPPPPQPPPPSPV) the composition is skewed to pro residues. S356 carries the post-translational modification Phosphoserine. Basic and acidic residues predominate over residues 361–371 (NRKEDKEENRK). 2 stretches are compositionally biased toward polar residues: residues 382 to 393 (TDTSSLTSSVNG) and 442 to 464 (QGGI…QPFI). The residue at position 447 (S447) is a Phosphoserine. Positions 512 to 524 (STDDPKAKDKDKM) are enriched in basic and acidic residues. The residue at position 614 (S614) is a Phosphoserine. The disordered stretch occupies residues 664–720 (APSTTITATSEKPQRDETKAGFTLTTPEQQPASQEYGAPPEEDRSRPHSAVSCPVKV). 2 stretches are compositionally biased toward polar residues: residues 665–674 (PSTTITATSE) and 686–696 (TLTTPEQQPAS). Phosphoserine is present on S924. Disordered stretches follow at residues 942–961 (PSPL…SSIF) and 990–1018 (HTSG…YVEA). WH2 domains follow at residues 981 to 1001 (LHSA…LRKT) and 1021 to 1041 (ERSA…LRKV). Residues 993–1010 (GGRDKLRKTAEQASEGRP) show a composition bias toward basic and acidic residues. Residues 1063-1091 (DKPQQEDRGLPPPPALPPPSTPASQVPSA) are disordered. The segment covering 1072-1083 (LPPPPALPPPST) has biased composition (pro residues). A Phosphoserine modification is found at S1099. The WH2 3 domain occupies 1109 to 1129 (ARQALMDAIRSGTGAARLRKV).

In terms of assembly, identified in a complex composed of ACTA1, COBL, GSN AND TMSB4X. Identified in a complex composed of COBL, PACSIN1 and WASL. Interacts with PACSIN1, PACSIN2 and PACSIN3. Interacts (via WH2 domains) with actin monomers. Interacts with both PACSIN1 and DBNL. Detected in brain (at protein level).

Its subcellular location is the cell membrane. It localises to the cytoplasm. The protein resides in the cytoskeleton. The protein localises to the cell projection. It is found in the ruffle. Its subcellular location is the cytosol. Functionally, plays an important role in the reorganization of the actin cytoskeleton. Binds to and sequesters actin monomers (G actin). Nucleates actin polymerization by assembling three actin monomers in cross-filament orientation and thereby promotes growth of actin filaments at the barbed end. Can also mediate actin depolymerization at barbed ends and severing of actin filaments. Promotes formation of cell ruffles. Regulates dendrite branching in Purkinje cells. Regulates neuron morphogenesis and increases branching of axons and dendrites. In Rattus norvegicus (Rat), this protein is Protein cordon-bleu (Cobl).